We begin with the raw amino-acid sequence, 226 residues long: N-acetyltransferase family 8 member 2 (226 aa).

2 helical membrane-spanning segments follow: residues 33-55 (FYHVLTLPHSLLLFPGVPVTIIL) and 60-82 (WLLATVYSFLFLLCLRLIFWVSC). Residues 69-221 (LFLLCLRLIF…FHFTYSLPSV (153 aa)) form the N-acetyltransferase domain. Lys204 is subject to N6-acetyllysine.

The protein belongs to the camello family.

The protein resides in the membrane. Probable acetyltransferase. Has no detectable histone acetyltransferase activity towards histone H3 or H4. The sequence is that of N-acetyltransferase family 8 member 2 from Rattus norvegicus (Rat).